A 172-amino-acid polypeptide reads, in one-letter code: Ribosome maturation factor RimM (172 aa).

In terms of domain architecture, PRC barrel spans 96–168; it reads DGEFYYHEII…RVDVELLEGL (73 aa).

Belongs to the RimM family. As to quaternary structure, binds ribosomal protein uS19.

It localises to the cytoplasm. Its function is as follows. An accessory protein needed during the final step in the assembly of 30S ribosomal subunit, possibly for assembly of the head region. Essential for efficient processing of 16S rRNA. May be needed both before and after RbfA during the maturation of 16S rRNA. It has affinity for free ribosomal 30S subunits but not for 70S ribosomes. The sequence is that of Ribosome maturation factor RimM from Streptococcus suis (strain 05ZYH33).